Consider the following 367-residue polypeptide: Uroporphyrinogen decarboxylase (367 aa).

Substrate contacts are provided by residues 28–32 (RQAGR), aspartate 78, tyrosine 158, threonine 213, and histidine 334.

This sequence belongs to the uroporphyrinogen decarboxylase family. In terms of assembly, homodimer.

The protein localises to the cytoplasm. It carries out the reaction uroporphyrinogen III + 4 H(+) = coproporphyrinogen III + 4 CO2. It functions in the pathway porphyrin-containing compound metabolism; protoporphyrin-IX biosynthesis; coproporphyrinogen-III from 5-aminolevulinate: step 4/4. Its function is as follows. Catalyzes the decarboxylation of four acetate groups of uroporphyrinogen-III to yield coproporphyrinogen-III. The chain is Uroporphyrinogen decarboxylase from Ralstonia pickettii (strain 12J).